Here is a 633-residue protein sequence, read N- to C-terminus: Glutamyl-tRNA(Gln) amidotransferase subunit E (633 aa).

Residues 414 to 437 (ALPDGNTEYMRPLPGKARMYPETD) form a disordered region.

The protein belongs to the GatB/GatE family. GatE subfamily. Heterodimer of GatD and GatE.

It carries out the reaction L-glutamyl-tRNA(Gln) + L-glutamine + ATP + H2O = L-glutaminyl-tRNA(Gln) + L-glutamate + ADP + phosphate + H(+). In terms of biological role, allows the formation of correctly charged Gln-tRNA(Gln) through the transamidation of misacylated Glu-tRNA(Gln) in organisms which lack glutaminyl-tRNA synthetase. The reaction takes place in the presence of glutamine and ATP through an activated gamma-phospho-Glu-tRNA(Gln). The GatDE system is specific for glutamate and does not act on aspartate. This is Glutamyl-tRNA(Gln) amidotransferase subunit E from Pyrococcus abyssi (strain GE5 / Orsay).